Consider the following 464-residue polypeptide: MPPAPPDQKPCHQLQPAPYRALSESILFGSVDEERWWHSTAPILSRLLISSNYDVDVQYKYLSLYRHLVLPALGPYPQRDPETGIIATQWRSGMVLTGLPIEFSNNVARALIRIGVDPVTADSGTAQDPFNTTRPKVYLETAARLLPGVDLTRFYEFETELVITKAEEAVLQANPDLFRSPWKSQILTAMDLQKSGTVLVKAYFYPQPKSAVTGRSTEDLLVNAIRKVDREGRFETQLANLQRYIERRRRGLHVPGVTADKPPATAADKAFDACSFFPHFLSTDLVEPGKSRVKFYASERHVNLQMVEDIWTFGGLRRDPDALRGLELLRHFWADIQMREGYYTMPRGFCELGKSSAGFEAPMMFHFHLDGSQSPFPDPQMYVCVFGMNSRKLVEGLTTFYRRVGWEEMASHYQGNFLANYPDEDFEKAAHLCAYVSFAYKNGGAYVTLYNHSFNPVGDVSFPN.

Residues M94 and E102 each contribute to the brevianamide F site. Residues R113, K201, and Y203 each contribute to the dimethylallyl diphosphate site. Residue Y205 coordinates brevianamide F. Dimethylallyl diphosphate contacts are provided by K294, Y296, Q380, Y382, Y446, and Y450.

The protein belongs to the tryptophan dimethylallyltransferase family.

The enzyme catalyses brevianamide F + dimethylallyl diphosphate = tryprostatin B + diphosphate. The protein operates within mycotoxin biosynthesis. Brevianamide F prenyltransferase; part of the gene cluster that mediates the biosynthesis of fumitremorgins, indole alkaloids that carry not only intriguing chemical structures, but also interesting biological and pharmacological activities. The biosynthesis of fumitremorgin-type alkaloids begins by condensation of the two amino acids L-tryptophan and L-proline to brevianamide F, catalyzed by the non-ribosomal peptide synthetase ftmA. Brevianamide F is then prenylated by the prenyltransferase ftmPT1/ftmB in the presence of dimethylallyl diphosphate, resulting in the formation of tryprostatin B. The three cytochrome P450 monooxygenases, ftmP450-1/ftmC, ftmP450-2/ftmE and ftmP450-3/FtmG, are responsible for the conversion of tryprostatin B to 6-hydroxytryprostatin B, tryprostatin A to fumitremorgin C and fumitremorgin C to 12,13-dihydroxyfumitremorgin C, respectively. The putative methyltransferase ftmMT/ftmD is expected for the conversion of 6-hydroxytryprostatin B to tryprostatin A. FtmPT2/FtmH catalyzes the prenylation of 12,13-dihydroxyfumitre-morgin C in the presence of dimethylallyl diphosphate, resulting in the formation of fumitremorgin B. Fumitremorgin B is further converted to verruculogen by ftmOx1/ftmF via the insertion of an endoperoxide bond between the two prenyl moieties. In some fungal species, verruculogen is further converted to fumitremorgin A, but the enzymes involved in this step have not been identified yet. The sequence is that of Tryprostatin B synthase from Aspergillus fumigatus (Neosartorya fumigata).